The sequence spans 138 residues: Translation initiation factor 5A (138 aa).

Lys-37 bears the Hypusine mark.

It belongs to the eIF-5A family.

It localises to the cytoplasm. In terms of biological role, functions by promoting the formation of the first peptide bond. The polypeptide is Translation initiation factor 5A (Pyrococcus furiosus (strain ATCC 43587 / DSM 3638 / JCM 8422 / Vc1)).